We begin with the raw amino-acid sequence, 251 residues long: tRNA pseudouridine synthase A (251 aa).

D56 functions as the Nucleophile in the catalytic mechanism. Residue Y110 coordinates substrate.

Belongs to the tRNA pseudouridine synthase TruA family.

The catalysed reaction is uridine(38/39/40) in tRNA = pseudouridine(38/39/40) in tRNA. In terms of biological role, formation of pseudouridine at positions 38, 39 and 40 in the anticodon stem and loop of transfer RNAs. The protein is tRNA pseudouridine synthase A of Picrophilus torridus (strain ATCC 700027 / DSM 9790 / JCM 10055 / NBRC 100828 / KAW 2/3).